A 362-amino-acid chain; its full sequence is Fructose-bisphosphate aldolase (362 aa).

Serine 65 lines the D-glyceraldehyde 3-phosphate pocket. The Proton donor role is filled by aspartate 112. Residues histidine 113, aspartate 147, glutamate 177, and histidine 229 each contribute to the Zn(2+) site. Glycine 230 serves as a coordination point for dihydroxyacetone phosphate. Residue histidine 268 coordinates Zn(2+). Residues 269–271 (GGS) and 290–293 (NVDT) each bind dihydroxyacetone phosphate.

This sequence belongs to the class II fructose-bisphosphate aldolase family. Homodimer. Zn(2+) is required as a cofactor.

The enzyme catalyses beta-D-fructose 1,6-bisphosphate = D-glyceraldehyde 3-phosphate + dihydroxyacetone phosphate. The protein operates within carbohydrate degradation; glycolysis; D-glyceraldehyde 3-phosphate and glycerone phosphate from D-glucose: step 4/4. In terms of biological role, catalyzes the aldol condensation of dihydroxyacetone phosphate (DHAP or glycerone-phosphate) with glyceraldehyde 3-phosphate (G3P) to form fructose 1,6-bisphosphate (FBP) in gluconeogenesis and the reverse reaction in glycolysis. The chain is Fructose-bisphosphate aldolase (fbaA) from Aspergillus oryzae (strain ATCC 42149 / RIB 40) (Yellow koji mold).